Reading from the N-terminus, the 297-residue chain is Formamidopyrimidine-DNA glycosylase (297 aa).

Residue Pro2 is the Schiff-base intermediate with DNA of the active site. The Proton donor role is filled by Glu3. Catalysis depends on Lys58, which acts as the Proton donor; for beta-elimination activity. Positions 106, 125, and 168 each coordinate DNA. The FPG-type zinc-finger motif lies at 259–295; that stretch reads RVYDREGLACTARGCRGVVRRVVQSGRSTFFCEVCQP. The active-site Proton donor; for delta-elimination activity is the Arg285.

Belongs to the FPG family. In terms of assembly, monomer. It depends on Zn(2+) as a cofactor.

The catalysed reaction is Hydrolysis of DNA containing ring-opened 7-methylguanine residues, releasing 2,6-diamino-4-hydroxy-5-(N-methyl)formamidopyrimidine.. It catalyses the reaction 2'-deoxyribonucleotide-(2'-deoxyribose 5'-phosphate)-2'-deoxyribonucleotide-DNA = a 3'-end 2'-deoxyribonucleotide-(2,3-dehydro-2,3-deoxyribose 5'-phosphate)-DNA + a 5'-end 5'-phospho-2'-deoxyribonucleoside-DNA + H(+). Involved in base excision repair of DNA damaged by oxidation or by mutagenic agents. Acts as a DNA glycosylase that recognizes and removes damaged bases. Has a preference for oxidized purines, such as 7,8-dihydro-8-oxoguanine (8-oxoG). Has AP (apurinic/apyrimidinic) lyase activity and introduces nicks in the DNA strand. Cleaves the DNA backbone by beta-delta elimination to generate a single-strand break at the site of the removed base with both 3'- and 5'-phosphates. The sequence is that of Formamidopyrimidine-DNA glycosylase from Methylobacterium nodulans (strain LMG 21967 / CNCM I-2342 / ORS 2060).